The following is a 271-amino-acid chain: Aquaporin-2 (271 aa).

Residues 1–11 (MWELRSIAFSR) are Cytoplasmic-facing. A helical membrane pass occupies residues 12–32 (AVLAEFLATLLFVFFGLGSAL). The Extracellular portion of the chain corresponds to 33 to 40 (NWPQALPS). A helical membrane pass occupies residues 41–59 (VLQIAMAFGLAIGTLVQAL). The Cytoplasmic portion of the chain corresponds to 60–64 (GHVSG). Positions 65-74 (AHINPAVTVA) form an intramembrane region, discontinuously helical. The NPA 1 motif lies at 68–70 (NPA). At 75–85 (CLVGCHVSFLR) the chain is on the cytoplasmic side. A helical transmembrane segment spans residues 86–107 (AVFYVAAQLLGAVAGAALLHEI). At 108-127 (TPPAIRGDLAVNALNNNSTA) the chain is on the extracellular side. A glycan (N-linked (GlcNAc...) asparagine) is linked at asparagine 123. Residues 128–148 (GQAVTVELFLTLQLVLCIFAS) traverse the membrane as a helical segment. The Cytoplasmic segment spans residues 149 to 156 (TDERRGDN). A helical transmembrane segment spans residues 157 to 176 (VGTPALSIGFSVALGHLLGI). At 177–180 (HYTG) the chain is on the extracellular side. The discontinuously helical intramembrane region spans 181-193 (CSMNPARSLAPAI). The NPA 2 motif lies at 184–186 (NPA). Residues 194-201 (VTGKFDDH) are Extracellular-facing. Residues 202–222 (WVFWIGPLVGAIVASLLYNYV) form a helical membrane-spanning segment. The Cytoplasmic segment spans residues 223–271 (LFPPAKSLSERLAVLKGLEPDTDWEEREVRRRQSVELHSPQSLPRGSKA). The tract at residues 251-271 (VRRRQSVELHSPQSLPRGSKA) is disordered. Serine 256 is subject to Phosphoserine. The span at 261-271 (SPQSLPRGSKA) shows a compositional bias: polar residues.

This sequence belongs to the MIP/aquaporin (TC 1.A.8) family. Homotetramer. In terms of processing, ser-256 phosphorylation is necessary and sufficient for expression at the apical membrane. Endocytosis is not phosphorylation-dependent. N-glycosylated.

Its subcellular location is the apical cell membrane. It is found in the basolateral cell membrane. The protein resides in the cell membrane. It localises to the cytoplasmic vesicle membrane. The protein localises to the golgi apparatus. Its subcellular location is the trans-Golgi network membrane. The enzyme catalyses H2O(in) = H2O(out). It catalyses the reaction glycerol(in) = glycerol(out). Functionally, forms a water-specific channel that provides the plasma membranes of renal collecting duct with high permeability to water, thereby permitting water to move in the direction of an osmotic gradient. Could also be permeable to glycerol. This Bos taurus (Bovine) protein is Aquaporin-2.